The primary structure comprises 114 residues: Cell cycle protein GpsB (114 aa).

Positions 42 to 77 form a coiled coil; that stretch reads YQKMADMNNEVVKLSEENHKLKKELEELRLRVATSR. A disordered region spans residues 74-99; sequence ATSRPQDNKSFSSNNTTTNTSSNNVD. The segment covering 85-97 has biased composition (low complexity); sequence SSNNTTTNTSSNN.

Belongs to the GpsB family. Forms polymers through the coiled coil domains. Interacts with PBP1, MreC and EzrA.

Its subcellular location is the cytoplasm. Its function is as follows. Divisome component that associates with the complex late in its assembly, after the Z-ring is formed, and is dependent on DivIC and PBP2B for its recruitment to the divisome. Together with EzrA, is a key component of the system that regulates PBP1 localization during cell cycle progression. Its main role could be the removal of PBP1 from the cell pole after pole maturation is completed. Also contributes to the recruitment of PBP1 to the division complex. Not essential for septum formation. The polypeptide is Cell cycle protein GpsB (Staphylococcus aureus (strain Mu3 / ATCC 700698)).